Reading from the N-terminus, the 481-residue chain is Neuronal acetylcholine receptor subunit eat-2 (481 aa).

Positions 1 to 19 (MFLLLQILYILLFLNLADT) are cleaved as a signal peptide. The Extracellular portion of the chain corresponds to 20–235 (SDDEYRLLKD…MHLKRRTMYY (216 aa)). N-linked (GlcNAc...) asparagine glycosylation is present at N93. A disulfide bridge connects residues C147 and C161. 3 helical membrane-spanning segments follow: residues 236 to 256 (GLNWIIPSILISLSNILGFTM), 264 to 284 (VTLQITNFLSIMVFLAMVSEV), and 292 to 312 (IPIIAAFFSFAIVILGVSICV). Topologically, residues 313–443 (SLITVNIFYR…WRFMAMVIDR (131 aa)) are cytoplasmic. The tract at residues 356 to 384 (KPKREKKKEEEEDEESNAGGKEEESELIS) is disordered. The helical transmembrane segment at 444 to 464 (ASLFLFTGLIFGTTFVIFAAC) threads the bilayer.

It belongs to the ligand-gated ion channel (TC 1.A.9) family. Acetylcholine receptor (TC 1.A.9.1) subfamily. In terms of assembly, neuronal AChR seems to be composed of two different type of subunits: alpha and beta.

The protein resides in the postsynaptic cell membrane. It is found in the cell membrane. Functionally, after binding acetylcholine, the AChR responds by an extensive change in conformation that affects all subunits and leads to opening of an ion-conducting channel across the plasma membrane. Nicotinic acetylcholine receptor in the MC pharyngeal motor neuron involved in pharyngeal pumping. Has a role in the determination of life span possibly via calorific restriction which affects growth rate, although this is independent of metabolic activity. The polypeptide is Neuronal acetylcholine receptor subunit eat-2 (Caenorhabditis briggsae).